We begin with the raw amino-acid sequence, 527 residues long: Probable serine/threonine-protein kinase DDB_G0271538 (527 aa).

Basic and acidic residues predominate over residues 1–10 (MNINFSKDDI). The disordered stretch occupies residues 1 to 24 (MNINFSKDDITGLPKSTKEEDEND). The Protein kinase domain occupies 33–294 (LFMDVEIGRG…KIVVEGLKVL (262 aa)). ATP contacts are provided by residues 39–47 (IGRGSFGQV) and Lys60. The active-site Proton acceptor is Asp156. Disordered regions lie at residues 304 to 375 (VKGK…ISGS), 422 to 452 (FTPPPNSKSMMDLKQSSAVDEDEDEDEDDVP), and 485 to 527 (TALD…KKKL). Residues 313 to 324 (DPDEDSFIDPND) show a composition bias toward acidic residues. Residues 325-359 (DSNNNNNSENNNNNNDNSNENNENNNENNNNSNEN) show a composition bias toward low complexity. A compositionally biased stretch (acidic residues) spans 440–452 (VDEDEDEDEDDVP). A compositionally biased stretch (basic residues) spans 512 to 527 (PKKKPNNKNKKKKKKL).

This sequence belongs to the protein kinase superfamily. TKL Ser/Thr protein kinase family.

It carries out the reaction L-seryl-[protein] + ATP = O-phospho-L-seryl-[protein] + ADP + H(+). It catalyses the reaction L-threonyl-[protein] + ATP = O-phospho-L-threonyl-[protein] + ADP + H(+). The chain is Probable serine/threonine-protein kinase DDB_G0271538 from Dictyostelium discoideum (Social amoeba).